The primary structure comprises 91 residues: Probable Fe(2+)-trafficking protein (91 aa).

This sequence belongs to the Fe(2+)-trafficking protein family. As to quaternary structure, monomer.

Its function is as follows. Could be a mediator in iron transactions between iron acquisition and iron-requiring processes, such as synthesis and/or repair of Fe-S clusters in biosynthetic enzymes. The chain is Probable Fe(2+)-trafficking protein from Salmonella agona (strain SL483).